A 290-amino-acid polypeptide reads, in one-letter code: Probable 2-(5''-triphosphoribosyl)-3'-dephosphocoenzyme-A synthase (290 aa).

Belongs to the CitG/MdcB family.

It carries out the reaction 3'-dephospho-CoA + ATP = 2'-(5''-triphospho-alpha-D-ribosyl)-3'-dephospho-CoA + adenine. Involved in the formation of 2-(5''-phosphoribosyl)-3'-dephosphocoenzyme-A, the prosthetic group of the acyl-carrier protein of the malonate decarboxylase. This is Probable 2-(5''-triphosphoribosyl)-3'-dephosphocoenzyme-A synthase from Pseudomonas fluorescens (strain Pf0-1).